Reading from the N-terminus, the 483-residue chain is Acyl-coenzyme A thioesterase 2, mitochondrial (483 aa).

Lys104 carries the post-translational modification N6-acetyllysine. Catalysis depends on charge relay system residues Ser294, Asp388, and His422. An N6-succinyllysine modification is found at Lys470. Positions 481-483 (SKV) match the Microbody targeting signal motif.

This sequence belongs to the C/M/P thioester hydrolase family. As to quaternary structure, monomer. As to expression, strongest expression in heart, liver, muscle and kidney. Weak in placenta and pancreas.

It is found in the mitochondrion. The enzyme catalyses hexadecanoyl-CoA + H2O = hexadecanoate + CoA + H(+). It catalyses the reaction tetradecanoyl-CoA + H2O = tetradecanoate + CoA + H(+). The catalysed reaction is octadecanoyl-CoA + H2O = octadecanoate + CoA + H(+). It carries out the reaction eicosanoyl-CoA + H2O = eicosanoate + CoA + H(+). The enzyme catalyses decanoyl-CoA + H2O = decanoate + CoA + H(+). It catalyses the reaction dodecanoyl-CoA + H2O = dodecanoate + CoA + H(+). The catalysed reaction is (9Z)-octadecenoyl-CoA + H2O = (9Z)-octadecenoate + CoA + H(+). It carries out the reaction (9Z)-hexadecenoyl-CoA + H2O = (9Z)-hexadecenoate + CoA + H(+). The enzyme catalyses (9E)-octadecenoyl-CoA + H2O = (9E)-octadecenoate + CoA + H(+). It catalyses the reaction (9Z,12Z)-octadecadienoyl-CoA + H2O = (9Z,12Z)-octadecadienoate + CoA + H(+). It functions in the pathway lipid metabolism; fatty acid metabolism. In terms of biological role, catalyzes the hydrolysis of acyl-CoAs into free fatty acids and coenzyme A (CoASH), regulating their respective intracellular levels. Displays higher activity toward long chain acyl CoAs (C14-C20). The enzyme is involved in enhancing the hepatic fatty acid oxidation in mitochondria. The sequence is that of Acyl-coenzyme A thioesterase 2, mitochondrial (ACOT2) from Homo sapiens (Human).